The sequence spans 142 residues: Cell division protein SepF (142 aa).

It belongs to the SepF family. Homodimer. Interacts with FtsZ.

It is found in the cytoplasm. Its function is as follows. Cell division protein that is part of the divisome complex and is recruited early to the Z-ring. Probably stimulates Z-ring formation, perhaps through the cross-linking of FtsZ protofilaments. Its function overlaps with FtsA. The polypeptide is Cell division protein SepF (Geobacillus kaustophilus (strain HTA426)).